The following is a 380-amino-acid chain: MADPKFQNLPGIAYDQPDVYETPDDPELDTSDYYEEEPENEAIERLHISPSVAHKRFSGATVEGSVDFTDRIGRRMCRGYDTRGSSDYELVGQGEKETPVQKCQRLQIEMNELLNEVAALQVDRKVADEEKQSYDAVATVISTARKVLESLKLEQVLGKEQTPGSKQVKALISQVEEFKQSGVLTAIPTPGTDLAATARVASLEQRISQLEKVLGAQPDKLSRLTAATNTTNVLEAVRHLSTKAALIQPDKLDTIEQRLTSLAGKMDAIAEKSSGSAQDAKRDQKITELYDIAKRTEPVVEILPHVIERMQALEALHKYANNFAKIIAEIEQKQGTITTSLVNNKELLHSVQETFAQNLETINSKVAKVEQRVAAISSAK.

The disordered stretch occupies residues M1–D32. Residues E21–D32 show a composition bias toward acidic residues. Phosphoserine occurs at positions 49, 58, and 86. Coiled-coil stretches lie at residues V100–D135 and E353–S377.

The protein belongs to the dynactin subunit 2 family. As to quaternary structure, subunit of dynactin, a multiprotein complex associated with dynein.

The protein resides in the cytoplasm. It localises to the cytoskeleton. The protein localises to the membrane. Its function is as follows. Modulates cytoplasmic dynein binding to an organelle, and plays a role in prometaphase chromosome alignment and spindle organization during mitosis. May play a role in synapse formation during brain development. The protein is Dynactin subunit 2 of Drosophila melanogaster (Fruit fly).